We begin with the raw amino-acid sequence, 161 residues long: Bacterioferritin (161 aa).

One can recognise a Ferritin-like diiron domain in the interval Met-1–Gly-145. Fe cation contacts are provided by Glu-18 and Glu-51. Met-52 contributes to the heme b binding site. Positions 54, 94, 127, and 130 each coordinate Fe cation.

The protein belongs to the bacterioferritin family. Homooligomer of 24 subunits, arranged as 12 dimers, that are packed together to form an approximately spherical molecule with a central cavity, in which large amounts of iron can be deposited. Requires heme b as cofactor.

It catalyses the reaction 4 Fe(2+) + O2 + 4 H(+) = 4 Fe(3+) + 2 H2O. The catalysed reaction is Fe(2+)(in) = Fe(2+)(out). Its function is as follows. Iron-storage protein, whose ferroxidase center binds Fe(2+), oxidizes it using dioxygen to Fe(3+), and participates in the subsequent Fe(3+) oxide mineral core formation within the central cavity of the BFR protein shell. This Brucella melitensis biotype 1 (strain ATCC 23456 / CCUG 17765 / NCTC 10094 / 16M) protein is Bacterioferritin (bfr).